A 429-amino-acid polypeptide reads, in one-letter code: Bifunctional protein GlmU (429 aa).

The pyrophosphorylase stretch occupies residues 1-223; it reads MKTSILILAA…EDEFMGINDK (223 aa). Residues 8 to 11, K22, and 81 to 82 each bind UDP-N-acetyl-alpha-D-glucosamine; these read LAAG and GT. Mg(2+) is bound at residue D102. UDP-N-acetyl-alpha-D-glucosamine contacts are provided by G135, E149, N164, and N221. N221 is a Mg(2+) binding site. A linker region spans residues 224 to 244; it reads FELSIAENFMQKKIKKYWMQQ. Positions 245–429 are N-acetyltransferase; it reads GVIFHLPQST…KDYYYKKFQK (185 aa). The UDP-N-acetyl-alpha-D-glucosamine site is built by R308 and K325. The active-site Proton acceptor is H336. Y339 and N350 together coordinate UDP-N-acetyl-alpha-D-glucosamine. Acetyl-CoA is bound by residues 359 to 360, S378, A396, and R413; that span reads NY.

In the N-terminal section; belongs to the N-acetylglucosamine-1-phosphate uridyltransferase family. This sequence in the C-terminal section; belongs to the transferase hexapeptide repeat family. As to quaternary structure, homotrimer. It depends on Mg(2+) as a cofactor.

Its subcellular location is the cytoplasm. The catalysed reaction is alpha-D-glucosamine 1-phosphate + acetyl-CoA = N-acetyl-alpha-D-glucosamine 1-phosphate + CoA + H(+). It catalyses the reaction N-acetyl-alpha-D-glucosamine 1-phosphate + UTP + H(+) = UDP-N-acetyl-alpha-D-glucosamine + diphosphate. It functions in the pathway nucleotide-sugar biosynthesis; UDP-N-acetyl-alpha-D-glucosamine biosynthesis; N-acetyl-alpha-D-glucosamine 1-phosphate from alpha-D-glucosamine 6-phosphate (route II): step 2/2. The protein operates within nucleotide-sugar biosynthesis; UDP-N-acetyl-alpha-D-glucosamine biosynthesis; UDP-N-acetyl-alpha-D-glucosamine from N-acetyl-alpha-D-glucosamine 1-phosphate: step 1/1. Its pathway is bacterial outer membrane biogenesis; LPS lipid A biosynthesis. Its function is as follows. Catalyzes the last two sequential reactions in the de novo biosynthetic pathway for UDP-N-acetylglucosamine (UDP-GlcNAc). The C-terminal domain catalyzes the transfer of acetyl group from acetyl coenzyme A to glucosamine-1-phosphate (GlcN-1-P) to produce N-acetylglucosamine-1-phosphate (GlcNAc-1-P), which is converted into UDP-GlcNAc by the transfer of uridine 5-monophosphate (from uridine 5-triphosphate), a reaction catalyzed by the N-terminal domain. The protein is Bifunctional protein GlmU of Campylobacter jejuni subsp. jejuni serotype O:2 (strain ATCC 700819 / NCTC 11168).